A 212-amino-acid chain; its full sequence is uncharacterized protein (212 aa).

The N-terminal stretch at 1-18 is a signal peptide; sequence MIPLVALLVLLTLQASPG. A helical membrane pass occupies residues 186–208; the sequence is IYRLATFFMVSLFVGSFVALVFV.

The protein to A.fulgidus AF_0540.

Its subcellular location is the membrane. This is an uncharacterized protein from Archaeoglobus fulgidus (strain ATCC 49558 / DSM 4304 / JCM 9628 / NBRC 100126 / VC-16).